The chain runs to 655 residues: Spastin (655 aa).

Residues 1–58 (MLFDLINSFLKNGINNSNNNNNNNNNKNNFYNSLEDDDYLLNNQTTKVSLYLYFFIFA) are Cytoplasmic-facing. Positions 59–79 (FMFLVVDLIMLYYKHRENIES) form an intramembrane region, helical. Topologically, residues 80–655 (RETDLSLKLN…EKWNQKFGTI (576 aa)) are cytoplasmic. Positions 102–140 (KSSPTTSTTTTTITPTTTSSSQLRQPSTPKTTTKTINSP) are enriched in low complexity. The interval 102–151 (KSSPTTSTTTTTITPTTTSSSQLRQPSTPKTTTKTINSPPSTPKSPPPLP) is disordered. Over residues 141 to 151 (PSTPKSPPPLP) the composition is skewed to pro residues. Residues 169-232 (LNEAKSQIDS…KRAEYLKNEL (64 aa)) form the MIT domain. Residues 261–325 (EQQQQQQQQS…TITSPGNKYG (65 aa)) form a disordered region. Over residues 262-320 (QQQQQQQQSSSTYRNSLNLSSSKSNSTINNRHSISSLSSLNSTTATTTTPSNTSTITSP) the composition is skewed to low complexity. Residue 424-431 (GPPGNGKT) coordinates ATP.

It belongs to the AAA ATPase family. Spastin subfamily. In terms of assembly, homohexamer. The homohexamer is stabilized by ATP-binding. The homohexamer may adopt a ring conformation through which microtubules pass prior to being severed. Interacts with microtubules.

It is found in the membrane. The protein resides in the cytoplasm. Its subcellular location is the cytoskeleton. The protein localises to the microtubule organizing center. It localises to the centrosome. It catalyses the reaction n ATP + n H2O + a microtubule = n ADP + n phosphate + (n+1) alpha/beta tubulin heterodimers.. ATP-dependent microtubule severing protein. Microtubule severing may promote reorganization of cellular microtubule arrays and the release of microtubules from the microtubule organizing center following nucleation. The protein is Spastin of Dictyostelium discoideum (Social amoeba).